Here is a 428-residue protein sequence, read N- to C-terminus: Glutamate-1-semialdehyde 2,1-aminomutase 1 (428 aa).

The residue at position 268 (lysine 268) is an N6-(pyridoxal phosphate)lysine.

It belongs to the class-III pyridoxal-phosphate-dependent aminotransferase family. HemL subfamily. Homodimer. The cofactor is pyridoxal 5'-phosphate.

Its subcellular location is the cytoplasm. It carries out the reaction (S)-4-amino-5-oxopentanoate = 5-aminolevulinate. It functions in the pathway porphyrin-containing compound metabolism; protoporphyrin-IX biosynthesis; 5-aminolevulinate from L-glutamyl-tRNA(Glu): step 2/2. This is Glutamate-1-semialdehyde 2,1-aminomutase 1 from Geobacillus thermodenitrificans (strain NG80-2).